We begin with the raw amino-acid sequence, 448 residues long: Antizyme inhibitor 1 (448 aa).

Belongs to the Orn/Lys/Arg decarboxylase class-II family. ODC antizyme inhibitor subfamily. Monomer. Interacts with OAZ1 and OAZ3; this interaction disrupts the interaction between the antizyme and ODC1. Post-translationally, ubiquitinated, leading to its proteasomal degradation; a process that is reduced in presence of antizyme OAZ1.

Its subcellular location is the nucleus. Antizyme inhibitor (AZI) protein that positively regulates ornithine decarboxylase (ODC) activity and polyamine uptake. AZI is an enzymatically inactive ODC homolog that counteracts the negative effect of ODC antizymes (AZs) OAZ1, OAZ2 and OAZ3 on ODC activity by competing with ODC for antizyme-binding. Inhibits antizyme-dependent ODC degradation and releases ODC monomers from their inactive complex with antizymes, leading to formation of the catalytically active ODC homodimer and restoring polyamine production. The protein is Antizyme inhibitor 1 (AZIN1) of Pongo abelii (Sumatran orangutan).